Here is a 57-residue protein sequence, read N- to C-terminus: Small hydrophobic protein (57 aa).

The Virion surface segment spans residues 1 to 8 (MPAIQPPL). A helical membrane pass occupies residues 9 to 29 (YLTFLLLTLLYLIITLYVWTI). At 30 to 57 (LTINHNTAVRYAALYQRSFSRWGFDQSL) the chain is on the intravirion side.

It belongs to the rubulavirus small hydrophobic protein family. As to quaternary structure, interacts with host TNFRSF1A, RIPK1 and IRAK1; these interactions interfere with host NF-kappa-B activation at the level of receptor complexes. Interacts with host protein UBQLN4.

The protein resides in the virion membrane. It localises to the host cell membrane. Plays a role in the inhibition of the host NF-kappa-B pathway. This inhibition occurs at the receptor level, by preventing the signaling of TNFR1 as well as IL-1R and TLR3. The protein is Small hydrophobic protein (SH) of Mumps virus genotype A (strain Jeryl-Lynn) (MuV).